The chain runs to 1004 residues: METESEQNSNSTNGSSSSGGSSRPQIAQMSLYERQAVQALQALQRQPNAAQYFHQFMLQQQLSNAQLHSLAAVQQATIAASRQASSPNTSTTQQQTTTTQASINLATTSAAQLISRSQSVSSPSATTLTQSVLLGNTTSPPLNQSQAQMYLRPQLGNLLQVNRTLGRNVPLASQLILMPNGAVAAVQQEVPSAQSPGVHADADQVQNLAVRNQQASAQGPQMQGSTQKAIPPGASPVSSLSQASSQALAVAQASSGATNQSLNLSQAGGGSGNSIPGSMGPGGGGQAHGGLGQLPSSGMGGGSCPRKGTGVVQPLPAAQTVTVSQGSQTEAESAAAKKAEADGSGQQNVGMNLTRTATPAPSQTLISSATYTQIQPHSLIQQQQQIHLQQKQVVIQQQIAIHHQQQFQHRQSQLLHTATHLQLAQQQQQQQQQQQQQQQPQATTLTAPQPPQVPPTQQVPPSQSQQQAQTLVVQPMLQSSPLSLPPDAAPKPPIPIQSKPPVAPIKPPQLGAAKMSAAQQPPPHIPVQVVGTRQPGTAQAQALGLAQLAAAVPTSRGMPGTVQSGQAHLASSPPSSQAPGALQECPPTLAPGMTLAPVQGTAHVVKGGATTSSPVVAQVPAAFYMQSVHLPGKPQTLAVKRKADSEEERDDVSTLGSMLPAKASPVAESPKVMDEKSSLGEKAESVANVNANTPSSELVALTPAPSVPPPTLAMVSRQMGDSKPPQAIVKPQILTHIIEGFVIQEGAEPFPVGCSQLLKESEKPLQTGLPTGLTENQSGGPLGVDSPSAELDKKANLLKCEYCGKYAPAEQFRGSKRFCSMTCAKRYNVSCSHQFRLKRKKMKEFQEANYARVRRRGPRRSSSDIARAKIQGKCHRGQEDSSRGSDNSSYDEALSPTSPGPLSVRAGHGERDLGNPNTAPPTPELHGINPVFLSSNPSRWSVEEVYEFIASLQGCQEIAEEFRSQEIDGQALLLLKEEHLMSAMNIKLGPALKICAKINVLKET.

The segment covering 1–22 (METESEQNSNSTNGSSSSGGSS) has biased composition (low complexity). 6 disordered regions span residues 1–24 (METESEQNSNSTNGSSSSGGSSRP), 212–241 (NQQASAQGPQMQGSTQKAIPPGASPVSSLS), 261–355 (SLNL…NLTR), 432–512 (QQQQ…QLGA), 556–589 (RGMPGTVQSGQAHLASSPPSSQAPGALQECPPTL), and 636–672 (TLAVKRKADSEEERDDVSTLGSMLPAKASPVAESPKV). A compositionally biased stretch (polar residues) spans 212–228 (NQQASAQGPQMQGSTQK). A compositionally biased stretch (gly residues) spans 279 to 303 (MGPGGGGQAHGGLGQLPSSGMGGGS). 2 stretches are compositionally biased toward polar residues: residues 319–329 (QTVTVSQGSQT) and 344–355 (SGQQNVGMNLTR). The segment covering 432-447 (QQQQQQQQPQATTLTA) has biased composition (low complexity). The segment covering 448–458 (PQPPQVPPTQQ) has biased composition (pro residues). Residues 459 to 482 (VPPSQSQQQAQTLVVQPMLQSSPL) are compositionally biased toward low complexity. Positions 483–495 (SLPPDAAPKPPIP) are enriched in pro residues. The span at 566 to 583 (QAHLASSPPSSQAPGALQ) shows a compositional bias: low complexity. At Ser645 the chain carries Phosphoserine. Residue Lys763 forms a Glycyl lysine isopeptide (Lys-Gly) (interchain with G-Cter in SUMO2) linkage. The FCS-type zinc finger occupies 791–825 (LDKKANLLKCEYCGKYAPAEQFRGSKRFCSMTCAK). Zn(2+)-binding residues include Cys800, Cys803, Cys819, and Cys823. A disordered region spans residues 848 to 928 (ANYARVRRRG…APPTPELHGI (81 aa)). The residue at position 898 (Ser898) is a Phosphoserine. Thr922 carries the post-translational modification Phosphothreonine. The region spanning 940–1004 (WSVEEVYEFI…CAKINVLKET (65 aa)) is the SAM domain.

As to quaternary structure, homodimer. Component of a PRC1-like complex. Interacts with RNF2 and CBX7. Interacts with PHC2, PHC2 and BMI1.

The protein localises to the nucleus. Functionally, component of a Polycomb group (PcG) multiprotein PRC1-like complex, a complex class required to maintain the transcriptionally repressive state of many genes, including Hox genes, throughout development. PcG PRC1 complex acts via chromatin remodeling and modification of histones; it mediates monoubiquitination of histone H2A 'Lys-119', rendering chromatin heritably changed in its expressibility. Required for proper control of cellular levels of GMNN expression. In Homo sapiens (Human), this protein is Polyhomeotic-like protein 1 (PHC1).